We begin with the raw amino-acid sequence, 618 residues long: Origin recognition complex subunit 2 (618 aa).

2 disordered regions span residues Met-1–Asp-116 and Asn-149–Asn-274. At Thr-24 the chain carries Phosphothreonine. Ser-26 and Ser-30 each carry phosphoserine. Over residues Thr-49–Pro-59 the composition is skewed to basic residues. Positions Ser-70 to Ile-79 are enriched in basic and acidic residues. Ser-87, Ser-91, and Ser-92 each carry phosphoserine. Residues Ala-94 to Glu-107 show a composition bias toward acidic residues. Phosphothreonine is present on residues Thr-151, Thr-154, Thr-157, Thr-160, Thr-167, Thr-170, and Thr-181. The span at Thr-151 to Pro-161 shows a compositional bias: low complexity. A compositionally biased stretch (basic residues) spans Ala-183–Ile-193. The span at Asp-199–Glu-208 shows a compositional bias: acidic residues. Over residues Ser-219–Asn-233 the composition is skewed to low complexity. Thr-258 is subject to Phosphothreonine. Ser-260 bears the Phosphoserine mark.

Belongs to the ORC2 family. As to quaternary structure, ORC is composed of six subunits. Interacts with Mcm10. Interacts with CG9890. Interaction between the TREX-2/AMEX complex and the ORC complex is required for ORC localization to mRNPs, and consequently mRNA export.

The protein resides in the nucleus. It is found in the chromosome. It localises to the centromere. In terms of biological role, component of the origin recognition complex (ORC) that binds origins of replication. DNA-binding is ATP-dependent, however specific DNA sequences that define origins of replication have not been identified so far. ORC is required to assemble the pre-replication complex necessary to initiate DNA replication. As part of the ORC complex, might also have a role in mRNA export. The protein is Origin recognition complex subunit 2 (Orc2) of Drosophila melanogaster (Fruit fly).